A 294-amino-acid chain; its full sequence is Protein ATC1/LIC4 (294 aa).

The disordered stretch occupies residues 114–178; that stretch reads YTGKASLDKS…SSSLASSDAN (65 aa). Positions 130–145 are enriched in basic and acidic residues; it reads HKPDKEQKNYKIDKPT. The span at 153–175 shows a compositional bias: low complexity; that stretch reads LKTTNEPMLSPASLSPSSSLASS.

Its subcellular location is the cytoplasm. It localises to the nucleus. In terms of biological role, involved in cation homeostasis and in the regulation of the cation stress signaling cascades. Also involved in bipolar budding. The polypeptide is Protein ATC1/LIC4 (ATC1) (Saccharomyces cerevisiae (strain ATCC 204508 / S288c) (Baker's yeast)).